We begin with the raw amino-acid sequence, 84 residues long: Small ribosomal subunit protein bS16 (84 aa).

It belongs to the bacterial ribosomal protein bS16 family.

This chain is Small ribosomal subunit protein bS16, found in Acaryochloris marina (strain MBIC 11017).